We begin with the raw amino-acid sequence, 484 residues long: UDP-N-acetylmuramate--L-alanine ligase (484 aa).

An ATP-binding site is contributed by 122 to 128; it reads GTHGKTT.

This sequence belongs to the MurCDEF family.

It is found in the cytoplasm. It catalyses the reaction UDP-N-acetyl-alpha-D-muramate + L-alanine + ATP = UDP-N-acetyl-alpha-D-muramoyl-L-alanine + ADP + phosphate + H(+). Its pathway is cell wall biogenesis; peptidoglycan biosynthesis. Functionally, cell wall formation. The polypeptide is UDP-N-acetylmuramate--L-alanine ligase (Mycobacterium sp. (strain JLS)).